The sequence spans 776 residues: Heat shock protein 110 (776 aa).

Residues 741 to 776 (ILNKKKPAAPAPPKKEEPQPAAGDQPQSQPGEMDVD) are disordered.

Belongs to the heat shock protein 70 family.

The polypeptide is Heat shock protein 110 (Caenorhabditis elegans).